A 224-amino-acid polypeptide reads, in one-letter code: Small ribosomal subunit protein uS3 (224 aa).

A KH type-2 domain is found at 20-89 (LDEFLANYFK…NVNITVSPVP (70 aa)).

This sequence belongs to the universal ribosomal protein uS3 family. As to quaternary structure, part of the 30S ribosomal subunit.

Its function is as follows. Binds the lower part of the 30S subunit head. The polypeptide is Small ribosomal subunit protein uS3 (Staphylothermus marinus (strain ATCC 43588 / DSM 3639 / JCM 9404 / F1)).